We begin with the raw amino-acid sequence, 137 residues long: Nucleoside diphosphate kinase (137 aa).

Lysine 9, phenylalanine 57, arginine 85, threonine 91, arginine 102, and asparagine 112 together coordinate ATP. The Pros-phosphohistidine intermediate role is filled by histidine 115.

This sequence belongs to the NDK family. Homotetramer. Requires Mg(2+) as cofactor.

Its subcellular location is the cytoplasm. It carries out the reaction a 2'-deoxyribonucleoside 5'-diphosphate + ATP = a 2'-deoxyribonucleoside 5'-triphosphate + ADP. It catalyses the reaction a ribonucleoside 5'-diphosphate + ATP = a ribonucleoside 5'-triphosphate + ADP. Functionally, major role in the synthesis of nucleoside triphosphates other than ATP. The ATP gamma phosphate is transferred to the NDP beta phosphate via a ping-pong mechanism, using a phosphorylated active-site intermediate. The chain is Nucleoside diphosphate kinase from Helicobacter hepaticus (strain ATCC 51449 / 3B1).